A 546-amino-acid polypeptide reads, in one-letter code: Probable protein kinase UbiB (546 aa).

Positions 124 to 502 constitute a Protein kinase domain; that stretch reads DFDIKPLASA…RVRQGQSRYL (379 aa). Residues 130–138 and Lys-153 each bind ATP; that span reads LASASIAQV. Asp-288 serves as the catalytic Proton acceptor. The next 2 helical transmembrane spans lie at 501 to 521 and 522 to 542; these read YLFG…INRP and DWQM…LIGW.

The protein belongs to the ABC1 family. UbiB subfamily.

It localises to the cell inner membrane. It functions in the pathway cofactor biosynthesis; ubiquinone biosynthesis [regulation]. In terms of biological role, is probably a protein kinase regulator of UbiI activity which is involved in aerobic coenzyme Q (ubiquinone) biosynthesis. This chain is Probable protein kinase UbiB, found in Enterobacter sp. (strain 638).